We begin with the raw amino-acid sequence, 360 residues long: Archaemetzincin-2 (360 aa).

Position 254 (histidine 254) interacts with Zn(2+). The active-site Proton acceptor is glutamate 255. Zn(2+) contacts are provided by histidine 258, histidine 264, cysteine 265, cysteine 270, cysteine 289, and cysteine 292.

This sequence belongs to the peptidase M54 family. The cofactor is Zn(2+). As to expression, down-regulated in testis from patients with maturation arrest (MA) or Sertoli cell-only syndrome (SCOS).

Probable zinc metalloprotease. The polypeptide is Archaemetzincin-2 (AMZ2) (Homo sapiens (Human)).